A 215-amino-acid polypeptide reads, in one-letter code: Disulfide-bond oxidoreductase YfcG (215 aa).

In terms of domain architecture, GST N-terminal spans 1–87 (MIDLYFAPTP…YLAEKTGLFL (87 aa)). Glutathione is bound by residues Asn11, Gln38, Arg40, Ile52, 71–72 (ES), and Arg132. Residues 90 to 215 (ETRERAATLQ…AQLGDERSDS (126 aa)) form the GST C-terminal domain.

Belongs to the GST superfamily. Nu-class GSH transferase family. As to quaternary structure, homodimer.

In terms of biological role, exhibits a very robust glutathione (GSH)-dependent disulfide-bond reductase activity toward the model substrate, 2-hydroxyethyl disulfide; the actual physiological substrates are not known. Also has a low GSH-dependent hydroperoxidase activity toward cumene hydroperoxide, but does not reduce H(2)O(2), tert-butyl hydroperoxide, benzyl peroxide, or lauroyl peroxide. Exhibits little or no GSH transferase activity with most typical electrophilic substrates, and has no detectable transferase activity using glutathionylspermidine (GspSH) as the nucleophilic substrate. Is involved in defense against oxidative stress, probably via its peroxidase activity. In Escherichia coli (strain K12), this protein is Disulfide-bond oxidoreductase YfcG (yfcG).